Consider the following 430-residue polypeptide: Adenosylhomocysteinase (430 aa).

Residues threonine 56, aspartate 131, and glutamate 156 each coordinate substrate. Residue 157–159 (TTT) coordinates NAD(+). Substrate-binding residues include lysine 186 and aspartate 190. Residues asparagine 191, 220 to 225 (GFGDVG), glutamate 243, asparagine 278, 299 to 301 (IGH), and asparagine 344 each bind NAD(+).

This sequence belongs to the adenosylhomocysteinase family. NAD(+) serves as cofactor.

It is found in the cytoplasm. It catalyses the reaction S-adenosyl-L-homocysteine + H2O = L-homocysteine + adenosine. It participates in amino-acid biosynthesis; L-homocysteine biosynthesis; L-homocysteine from S-adenosyl-L-homocysteine: step 1/1. May play a key role in the regulation of the intracellular concentration of adenosylhomocysteine. The polypeptide is Adenosylhomocysteinase (Halorhodospira halophila (strain DSM 244 / SL1) (Ectothiorhodospira halophila (strain DSM 244 / SL1))).